Reading from the N-terminus, the 329-residue chain is Malate dehydrogenase (329 aa).

12–18 contacts NAD(+); that stretch reads GAAGQIG. Positions 93 and 99 each coordinate substrate. Residues Asn106, Gln113, and 130-132 contribute to the NAD(+) site; that span reads TGN. Asn132 and Arg163 together coordinate substrate. The Proton acceptor role is filled by His188.

Belongs to the LDH/MDH superfamily. MDH type 2 family.

It carries out the reaction (S)-malate + NAD(+) = oxaloacetate + NADH + H(+). In terms of biological role, catalyzes the reversible oxidation of malate to oxaloacetate. This is Malate dehydrogenase from Mycobacterium leprae (strain TN).